The following is a 91-amino-acid chain: Small ribosomal subunit protein uS19 (91 aa).

This sequence belongs to the universal ribosomal protein uS19 family.

Its function is as follows. Protein S19 forms a complex with S13 that binds strongly to the 16S ribosomal RNA. The sequence is that of Small ribosomal subunit protein uS19 from Exiguobacterium sp. (strain ATCC BAA-1283 / AT1b).